A 332-amino-acid chain; its full sequence is 4-hydroxy-3-methylbut-2-enyl diphosphate reductase (332 aa).

Position 13 (Cys13) interacts with [4Fe-4S] cluster. His41 and His75 together coordinate (2E)-4-hydroxy-3-methylbut-2-enyl diphosphate. Residues His41 and His75 each coordinate dimethylallyl diphosphate. Isopentenyl diphosphate-binding residues include His41 and His75. Cys97 lines the [4Fe-4S] cluster pocket. A (2E)-4-hydroxy-3-methylbut-2-enyl diphosphate-binding site is contributed by His125. A dimethylallyl diphosphate-binding site is contributed by His125. His125 contacts isopentenyl diphosphate. Glu127 acts as the Proton donor in catalysis. Thr168 contacts (2E)-4-hydroxy-3-methylbut-2-enyl diphosphate. A [4Fe-4S] cluster-binding site is contributed by Cys229. Residues Ser257, Ser258, Asn259, and Ser306 each coordinate (2E)-4-hydroxy-3-methylbut-2-enyl diphosphate. Ser257, Ser258, Asn259, and Ser306 together coordinate dimethylallyl diphosphate. Isopentenyl diphosphate-binding residues include Ser257, Ser258, Asn259, and Ser306.

It belongs to the IspH family. [4Fe-4S] cluster serves as cofactor.

The catalysed reaction is isopentenyl diphosphate + 2 oxidized [2Fe-2S]-[ferredoxin] + H2O = (2E)-4-hydroxy-3-methylbut-2-enyl diphosphate + 2 reduced [2Fe-2S]-[ferredoxin] + 2 H(+). It catalyses the reaction dimethylallyl diphosphate + 2 oxidized [2Fe-2S]-[ferredoxin] + H2O = (2E)-4-hydroxy-3-methylbut-2-enyl diphosphate + 2 reduced [2Fe-2S]-[ferredoxin] + 2 H(+). It participates in isoprenoid biosynthesis; dimethylallyl diphosphate biosynthesis; dimethylallyl diphosphate from (2E)-4-hydroxy-3-methylbutenyl diphosphate: step 1/1. It functions in the pathway isoprenoid biosynthesis; isopentenyl diphosphate biosynthesis via DXP pathway; isopentenyl diphosphate from 1-deoxy-D-xylulose 5-phosphate: step 6/6. Its function is as follows. Catalyzes the conversion of 1-hydroxy-2-methyl-2-(E)-butenyl 4-diphosphate (HMBPP) into a mixture of isopentenyl diphosphate (IPP) and dimethylallyl diphosphate (DMAPP). Acts in the terminal step of the DOXP/MEP pathway for isoprenoid precursor biosynthesis. The polypeptide is 4-hydroxy-3-methylbut-2-enyl diphosphate reductase (Chlorobaculum parvum (strain DSM 263 / NCIMB 8327) (Chlorobium vibrioforme subsp. thiosulfatophilum)).